A 336-amino-acid polypeptide reads, in one-letter code: MSTEHVSNVYSVESLLSNVEKSSVSPTESIEDRNEFMITEDVMSSWQRMAATISLQQKLLMMQQTMPRPPPVNILGNFPFGFLNAPMFWQQYLRSMAMGIIPQNPESPSASVWNRTPTPPVEIKPFHCQKCTKLFSTIAALEQHQQVHVSDKQFECKQCGKTFKRSSTLSTHLLIHSDTRPYPCEYCGKRFHQKSDMKKHTYIHTGEKPHKCTVCGKAFSQSSNLITHTRKHTGFKPFACDVCGRTFQRKVDRRRHRESHHPGHPEECVSASQISSDLSPKGYMTPPTSNGYLDSSDEFLNVFRLPAELLAIKAEMGEEMEEADDEEEKVLNLSVS.

5 consecutive C2H2-type zinc fingers follow at residues F126–H148, F154–H176, Y182–H204, H210–H232, and F238–H260. The tract at residues R253 to N290 is disordered.

In terms of assembly, may interact with transcription factor unc-3. As to expression, expressed in the BDU neurons, the touch neurons, the VA, VB and VC motor neurons, two AVF interneurons and unidentified neurons of the retrovesicular ganglion (at protein level).

Its subcellular location is the nucleus. It localises to the cell projection. It is found in the axon. The protein localises to the perikaryon. Transcription factor. Plays a role in the determination of neuroblast cell fate and neuronal differentiation. Negatively modulates expression of several components of dense-core vesicles (DCVs), thereby, in a DCV membrane protein ida-1-dependent manner, regulating neurosecretion. Negatively modulates the transcription of its own gene, the mechanosensory gene mec-3, and also other touch neuron-specific genes in the BDU neurons; required for coordinated movement. Required to determine the identity of BDU sensory neurons in concert with transcription factor unc-86, regulating expression of a number of genes, including transcription factors ceh-14 and ahr-1, neuropeptides flp-10, nlp-1 and nlp-15, and tyramine receptor-encoding ser-2. Acts in concert with non-canonical WNT signaling to negatively modulate transcription of mec-3 gene in BDU neurons. May act in concert with transcription factor unc-3 in motor neuron fate determination. May play a role programmed cell death. This is Zinc finger protein GFI1 homolog pag-3 from Caenorhabditis elegans.